Consider the following 1135-residue polypeptide: Ubiquitin carboxyl-terminal hydrolase 7 (1135 aa).

The 142-residue stretch at 31-172 (EGHLSLDIDC…NDTIKLRCRF (142 aa)) folds into the MATH domain. Positions 193–503 (IGLRNQGATC…SAYMLVYVRD (311 aa)) constitute a USP domain. Residue Cys-202 is the Nucleophile of the active site. His-442 functions as the Proton acceptor in the catalytic mechanism.

It belongs to the peptidase C19 family.

Its subcellular location is the nucleus. The catalysed reaction is Thiol-dependent hydrolysis of ester, thioester, amide, peptide and isopeptide bonds formed by the C-terminal Gly of ubiquitin (a 76-residue protein attached to proteins as an intracellular targeting signal).. Hydrolase that deubiquitinates target proteins. May play a role in regulating the levels of endogenous siRNA biogenesis. This is Ubiquitin carboxyl-terminal hydrolase 7 from Caenorhabditis elegans.